Here is a 287-residue protein sequence, read N- to C-terminus: Elongation factor Ts (287 aa).

An involved in Mg(2+) ion dislocation from EF-Tu region spans residues 80-83; the sequence is TDFL.

It belongs to the EF-Ts family.

Its subcellular location is the cytoplasm. Associates with the EF-Tu.GDP complex and induces the exchange of GDP to GTP. It remains bound to the aminoacyl-tRNA.EF-Tu.GTP complex up to the GTP hydrolysis stage on the ribosome. The chain is Elongation factor Ts from Pseudomonas entomophila (strain L48).